Reading from the N-terminus, the 499-residue chain is Putative alpha-galactosidase 8 (499 aa).

N154 and N191 each carry an N-linked (GlcNAc...) asparagine glycan. D238 serves as the catalytic Nucleophile. N-linked (GlcNAc...) asparagine glycosylation is present at N256. The Proton donor role is filled by D303.

It belongs to the glycosyl hydrolase 27 family.

It is found in the secreted. It carries out the reaction Hydrolysis of terminal, non-reducing alpha-D-galactose residues in alpha-D-galactosides, including galactose oligosaccharides, galactomannans and galactolipids.. Functionally, putative alpha-galactosidase involved in the degradation of simple oligosaccharides like melibiose, raffinose and stachyose, and of polymeric galacto(gluco)mannans. This chain is Putative alpha-galactosidase 8 (agl8), found in Emericella nidulans (strain FGSC A4 / ATCC 38163 / CBS 112.46 / NRRL 194 / M139) (Aspergillus nidulans).